The chain runs to 204 residues: Imidazoleglycerol-phosphate dehydratase (204 aa).

It belongs to the imidazoleglycerol-phosphate dehydratase family.

It localises to the cytoplasm. It carries out the reaction D-erythro-1-(imidazol-4-yl)glycerol 3-phosphate = 3-(imidazol-4-yl)-2-oxopropyl phosphate + H2O. The protein operates within amino-acid biosynthesis; L-histidine biosynthesis; L-histidine from 5-phospho-alpha-D-ribose 1-diphosphate: step 6/9. In Albidiferax ferrireducens (strain ATCC BAA-621 / DSM 15236 / T118) (Rhodoferax ferrireducens), this protein is Imidazoleglycerol-phosphate dehydratase.